A 66-amino-acid chain; its full sequence is Phylloseptin-S4 (66 aa).

The N-terminal stretch at 1 to 22 (MAFLKKSLFLVLFLGLVSLSIC) is a signal peptide. Residues 23–46 (EEEKRETEEEEHDQEEDDKSEEKR) constitute a propeptide that is removed on maturation. Positions 25–44 (EKRETEEEEHDQEEDDKSEE) are disordered. A compositionally biased stretch (acidic residues) spans 30–41 (EEEEHDQEEDDK). Leucine 65 is modified (leucine amide).

As to expression, expressed by the skin glands.

Its subcellular location is the secreted. It localises to the target cell membrane. Antimicrobial peptide with high activity against Gram-positive bacteria, moderate activity against Gram-negative bacteria, and moderate activity against fungi. Acts by causing bacterial membrane disruption inducing leakage of the intracellular content followed by cell death. It adopts an alpha-helical amphipathic structure in membrane environments. Also shows highly potent antiparasitic activity against Leishmania species. Shows moderate hemolytic activity on human erythrocytes (LC(50)=33 uM). Is also active on human monocytes (IC(50)=23 uM). In Phyllomedusa sauvagei (Sauvage's leaf frog), this protein is Phylloseptin-S4.